We begin with the raw amino-acid sequence, 206 residues long: Inactive ribonuclease-like protein 9 (206 aa).

The N-terminal stretch at 1–26 (MMRTLITTHSLLLFLLLLQLLQPLQF) is a signal peptide. Cystine bridges form between Cys99–Cys154, Cys117–Cys169, and Cys124–Cys131. N-linked (GlcNAc...) asparagine glycosylation is present at Asn132.

This sequence belongs to the pancreatic ribonuclease family.

It is found in the secreted. In terms of biological role, does not exhibit any ribonuclease activity. The protein is Inactive ribonuclease-like protein 9 (RNASE9) of Saimiri boliviensis boliviensis (Bolivian squirrel monkey).